Reading from the N-terminus, the 152-residue chain is SsrA-binding protein (152 aa).

This sequence belongs to the SmpB family.

It is found in the cytoplasm. Required for rescue of stalled ribosomes mediated by trans-translation. Binds to transfer-messenger RNA (tmRNA), required for stable association of tmRNA with ribosomes. tmRNA and SmpB together mimic tRNA shape, replacing the anticodon stem-loop with SmpB. tmRNA is encoded by the ssrA gene; the 2 termini fold to resemble tRNA(Ala) and it encodes a 'tag peptide', a short internal open reading frame. During trans-translation Ala-aminoacylated tmRNA acts like a tRNA, entering the A-site of stalled ribosomes, displacing the stalled mRNA. The ribosome then switches to translate the ORF on the tmRNA; the nascent peptide is terminated with the 'tag peptide' encoded by the tmRNA and targeted for degradation. The ribosome is freed to recommence translation, which seems to be the essential function of trans-translation. This Helicobacter acinonychis (strain Sheeba) protein is SsrA-binding protein.